A 143-amino-acid polypeptide reads, in one-letter code: uncharacterized protein (143 aa).

The HTH marR-type domain maps to 5-137; sequence DARLASDLSL…LRNAADLILE (133 aa). The segment at residues 51–74 is a DNA-binding region (H-T-H motif); that stretch reads PGALAIRERVRPPSMTRVIASLAD.

As to quaternary structure, homodimer.

This is an uncharacterized protein from Mycobacterium leprae (strain TN).